Here is a 264-residue protein sequence, read N- to C-terminus: Ribonuclease HII (264 aa).

The 192-residue stretch at 33-224 folds into the RNase H type-2 domain; that stretch reads GPVAGVDEVG…VRRVASGSNT (192 aa). Positions 39, 40, and 133 each coordinate a divalent metal cation. The interval 222-264 is disordered; sequence SNTAEVADGQPDPRDGTAQTGEGRWSKSSHPATMRATGRAQGT.

This sequence belongs to the RNase HII family. Mn(2+) is required as a cofactor. Mg(2+) serves as cofactor.

It localises to the cytoplasm. The catalysed reaction is Endonucleolytic cleavage to 5'-phosphomonoester.. Functionally, endonuclease that specifically degrades the RNA of RNA-DNA hybrids. In Mycobacterium bovis (strain ATCC BAA-935 / AF2122/97), this protein is Ribonuclease HII.